The following is a 658-amino-acid chain: Glycogen debranching enzyme (658 aa).

The active-site Nucleophile is the aspartate 335. Residue glutamate 370 is the Proton donor of the active site. Residues 457-468 (NDANGEGNRDGT) are compositionally biased toward basic and acidic residues. Positions 457–481 (NDANGEGNRDGTDSNFSNNHGTEGL) are disordered.

Belongs to the glycosyl hydrolase 13 family.

The enzyme catalyses Hydrolysis of (1-&gt;6)-alpha-D-glucosidic linkages to branches with degrees of polymerization of three or four glucose residues in limit dextrin.. The protein operates within glycan degradation; glycogen degradation. Removes maltotriose and maltotetraose chains that are attached by 1,6-alpha-linkage to the limit dextrin main chain, generating a debranched limit dextrin. The polypeptide is Glycogen debranching enzyme (Pectobacterium atrosepticum (strain SCRI 1043 / ATCC BAA-672) (Erwinia carotovora subsp. atroseptica)).